Reading from the N-terminus, the 104-residue chain is Late embryogenis abundant protein 41 (104 aa).

A mitochondrion-targeting transit peptide spans 1–31 (MAARSLSGAVKSLCSAASGSLSCSIVLRRSY).

The protein belongs to the LEA type 3 family.

The protein resides in the mitochondrion. This is Late embryogenis abundant protein 41 from Arabidopsis thaliana (Mouse-ear cress).